Reading from the N-terminus, the 590-residue chain is MPTRLTNYFLRTLREDPADAEVTSHRLLVRAGYIRRQAPGVFAWLPLGLRVKAKIERIIREELAAAGAHEVHFPALLPREPYEITGRWEEYGDALFHLKDRKGADYLLAPTHEEAFTLLVKDLYSSYKDLPLTIFQIQDKYRDEARPRAGLLRGREFTMKDAYSFDATDAGLDVSYQAQRDAYERIFARLGLDFVIVQADAGAMGGSRSEEFLHPTPIGEDTFVRSAGGYAANVEAFTTVAPPARPFEGLPSPEVHDTPNAPTIQALVEVANEQSPRPDGRVWTAADTLKNVVLALTHLDGTRELVVVGLPGDREVDLKRAEVAFAPAGVEAATEDDFAANPGLVKGYIGPWSAGGPVLGEEAATGLRFLVDLRVVDGSGWITGANLPGKHVFGLVAGRDFDWDGTVEVAEVKAGDPAPDGSGPVELARGMEIGHVFQLGRKYADALGLTVLDENGKLVTVTMGSYGIGVTRILAIIAEENNDDKGLVWPEAVAPFDVHVVAAGREQVAFDVAEQAVAQLEAVGLDVLYDDRPKVSPGVKFGDAELIGVPRVLVVGRGAAQGEVELWDRRGGNHTTLPLSEAVAALTTSS.

This sequence belongs to the class-II aminoacyl-tRNA synthetase family. ProS type 1 subfamily. Homodimer.

The protein localises to the cytoplasm. It carries out the reaction tRNA(Pro) + L-proline + ATP = L-prolyl-tRNA(Pro) + AMP + diphosphate. Its function is as follows. Catalyzes the attachment of proline to tRNA(Pro) in a two-step reaction: proline is first activated by ATP to form Pro-AMP and then transferred to the acceptor end of tRNA(Pro). As ProRS can inadvertently accommodate and process non-cognate amino acids such as alanine and cysteine, to avoid such errors it has two additional distinct editing activities against alanine. One activity is designated as 'pretransfer' editing and involves the tRNA(Pro)-independent hydrolysis of activated Ala-AMP. The other activity is designated 'posttransfer' editing and involves deacylation of mischarged Ala-tRNA(Pro). The misacylated Cys-tRNA(Pro) is not edited by ProRS. This Leifsonia xyli subsp. xyli (strain CTCB07) protein is Proline--tRNA ligase.